Here is a 565-residue protein sequence, read N- to C-terminus: Urocanate hydratase (565 aa).

Residues 58 to 59 (GG), Gln-136, 182 to 184 (GMG), Glu-202, Arg-207, 245 to 246 (NA), 266 to 270 (QTSAH), 276 to 277 (YL), and Tyr-325 contribute to the NAD(+) site. The active site involves Cys-413. NAD(+) is bound at residue Gly-495.

It belongs to the urocanase family. Requires NAD(+) as cofactor.

It is found in the cytoplasm. The catalysed reaction is 4-imidazolone-5-propanoate = trans-urocanate + H2O. It functions in the pathway amino-acid degradation; L-histidine degradation into L-glutamate; N-formimidoyl-L-glutamate from L-histidine: step 2/3. Functionally, catalyzes the conversion of urocanate to 4-imidazolone-5-propionate. In Vibrio vulnificus (strain YJ016), this protein is Urocanate hydratase.